The chain runs to 349 residues: MNDTADKLTFTRPDDWHLHLRDGNAMRSVLPDTARRFARAIIMPNLKPPIVTTEQAAAYRVRILSALPAELAGRFEPLMTLYLTDTTSPEEITRAQASGIVQGIKLYPAGATTHSDAGVTDIARCEATLEKMEELDMPLLVHGEVVDPAVDVFDREKIFIDRVLTPLLQRFPGLRVVFEHITTREAVEFVQTAPNRIAATITAHHLMLNRNALFTGGLRPHHYCLPVLKREIHRQALLEAATSGHSRFFLGTDSAPHPVRDKESACGCAGIYSAHAAIEFYAEVFEQAGRLDRLEAFTSFHGPDFYGLPRNTDRISLIRESWQIPEQVELGEEKLIPLRAGEHARWKLA.

Histidine 17 and histidine 19 together coordinate Zn(2+). Residues 19-21 and asparagine 45 each bind substrate; that span reads HLR. Positions 105, 142, and 180 each coordinate Zn(2+). Position 105 is an N6-carboxylysine (lysine 105). Histidine 142 serves as a coordination point for substrate. Position 225 (leucine 225) interacts with substrate. Aspartate 253 provides a ligand contact to Zn(2+). Aspartate 253 is a catalytic residue. Substrate contacts are provided by histidine 257 and alanine 269.

It belongs to the metallo-dependent hydrolases superfamily. DHOase family. Class II DHOase subfamily. As to quaternary structure, homodimer. Zn(2+) is required as a cofactor.

It catalyses the reaction (S)-dihydroorotate + H2O = N-carbamoyl-L-aspartate + H(+). It participates in pyrimidine metabolism; UMP biosynthesis via de novo pathway; (S)-dihydroorotate from bicarbonate: step 3/3. Catalyzes the reversible cyclization of carbamoyl aspartate to dihydroorotate. The chain is Dihydroorotase from Nitrosomonas europaea (strain ATCC 19718 / CIP 103999 / KCTC 2705 / NBRC 14298).